Here is a 445-residue protein sequence, read N- to C-terminus: MRYHPHTPDDVRAMLDVVGAERVDDLFRSIPQALRLDRPLDLPPAADEIALFSELRRLAARNETAHPPFVGAGCYPHHVPPVVDQLLLRGEFFTAYTPYQPEISQGTLQALFEWQTFVCLLTGMDVSNASMYDGATATAEAALMAGRITGRDKVVVSAALHPEYRKVLATYLRSTGDEIVTVPFGADGRTDLAALQQAVDGRTACVILGYPNFLGVVDALPEAAAIARKAGALTVSATAEAVSLGLLQAPGALGADVAVGTFQSFGNPMSFGGPAPGFFATREKHVRQMPGRVAGATVDKQGRRGFVLTLSTREQHIRREKATSNICTNSGLCALASTVHLSLLGKRGLAELARLNHGRARMLRDAMERAGCRPVFSGPFFNEQVFDVGDAEAVVAKLAKRGIVAGAPLARWFPDAPSAKGALLCAATELHGPELIQLFAGAVRS.

The protein belongs to the GcvP family. N-terminal subunit subfamily. In terms of assembly, the glycine cleavage system is composed of four proteins: P, T, L and H. In this organism, the P 'protein' is a heterodimer of two subunits.

The enzyme catalyses N(6)-[(R)-lipoyl]-L-lysyl-[glycine-cleavage complex H protein] + glycine + H(+) = N(6)-[(R)-S(8)-aminomethyldihydrolipoyl]-L-lysyl-[glycine-cleavage complex H protein] + CO2. The glycine cleavage system catalyzes the degradation of glycine. The P protein binds the alpha-amino group of glycine through its pyridoxal phosphate cofactor; CO(2) is released and the remaining methylamine moiety is then transferred to the lipoamide cofactor of the H protein. The sequence is that of Probable glycine dehydrogenase (decarboxylating) subunit 1 from Anaeromyxobacter dehalogenans (strain 2CP-C).